The chain runs to 391 residues: 3-ketoacyl-CoA thiolase (391 aa).

The active-site Acyl-thioester intermediate is the Cys95. Residues His347 and Cys377 each act as proton acceptor in the active site.

This sequence belongs to the thiolase-like superfamily. Thiolase family. Heterotetramer of two alpha chains (FadB) and two beta chains (FadA).

It localises to the cytoplasm. It catalyses the reaction an acyl-CoA + acetyl-CoA = a 3-oxoacyl-CoA + CoA. It functions in the pathway lipid metabolism; fatty acid beta-oxidation. In terms of biological role, catalyzes the final step of fatty acid oxidation in which acetyl-CoA is released and the CoA ester of a fatty acid two carbons shorter is formed. In Marinobacter nauticus (strain ATCC 700491 / DSM 11845 / VT8) (Marinobacter aquaeolei), this protein is 3-ketoacyl-CoA thiolase.